The following is a 421-amino-acid chain: Phosphoribosylamine--glycine ligase (421 aa).

Residues 108-314 form the ATP-grasp domain; it reads KEIMVKYNVP…FAQNIDDIMM (207 aa). Position 134-195 (134-195) interacts with ATP; sequence IEEQGAPIVV…EEFLDGEEFS (62 aa). 2 residues coordinate Mg(2+): Glu284 and Asn286.

It belongs to the GARS family. Requires Mg(2+) as cofactor. Mn(2+) serves as cofactor.

It catalyses the reaction 5-phospho-beta-D-ribosylamine + glycine + ATP = N(1)-(5-phospho-beta-D-ribosyl)glycinamide + ADP + phosphate + H(+). The protein operates within purine metabolism; IMP biosynthesis via de novo pathway; N(1)-(5-phospho-D-ribosyl)glycinamide from 5-phospho-alpha-D-ribose 1-diphosphate: step 2/2. The chain is Phosphoribosylamine--glycine ligase from Streptococcus pyogenes serotype M3 (strain SSI-1).